The chain runs to 214 residues: Large ribosomal subunit protein uL3 (214 aa).

The disordered stretch occupies residues 129 to 155 (FGRGPMSHGSKNHRRPGSVGAGTTPGR).

It belongs to the universal ribosomal protein uL3 family. In terms of assembly, part of the 50S ribosomal subunit. Forms a cluster with proteins L14 and L19.

Its function is as follows. One of the primary rRNA binding proteins, it binds directly near the 3'-end of the 23S rRNA, where it nucleates assembly of the 50S subunit. This is Large ribosomal subunit protein uL3 from Synechococcus sp. (strain JA-3-3Ab) (Cyanobacteria bacterium Yellowstone A-Prime).